The sequence spans 236 residues: Syntaxin-8 (236 aa).

Residues 1-215 (MAPDPWFSTY…LVDRKSASCG (215 aa)) lie on the Cytoplasmic side of the membrane. Positions 42 to 65 (LTIRTLLKNLKVKIDLLKDLLLRA) form a coiled coil. Phosphoserine occurs at positions 102 and 160. The region spanning 145-207 (QKIIQEQDAG…RTEARRVTLV (63 aa)) is the t-SNARE coiled-coil homology domain. A helical; Anchor for type IV membrane protein transmembrane segment spans residues 216–232 (MIMVILLLLVAIVVVAV). Residues 233–236 (WPTN) lie on the Vesicular side of the membrane.

It belongs to the syntaxin family. As to quaternary structure, part of the SNARE core complex containing STX7, VAMP8 and VTI1B. Interacts with VAMP8. Forms a SNARE complex with STX7, VTI1B and VAMP8 which functions in the homotypic fusion of late endosomes. Component of the SNARE complex composed of STX7, STX8, VAMP7 and VTI1B that is required for heterotypic fusion of late endosomes with lysosomes. Interacts with HECTD3. Interacts with TPC1. Ubiquitinated by HECTD3. In terms of tissue distribution, widely expressed in all tissues examined.

The protein resides in the membrane. In terms of biological role, vesicle trafficking protein that functions in the early secretory pathway, possibly by mediating retrograde transport from cis-Golgi membranes to the ER. The sequence is that of Syntaxin-8 (Stx8) from Rattus norvegicus (Rat).